Reading from the N-terminus, the 612-residue chain is Dihydroxy-acid dehydratase (612 aa).

Aspartate 81 serves as a coordination point for Mg(2+). Position 122 (cysteine 122) interacts with [2Fe-2S] cluster. Residues aspartate 123 and lysine 124 each contribute to the Mg(2+) site. The residue at position 124 (lysine 124) is an N6-carboxylysine. Residue cysteine 193 coordinates [2Fe-2S] cluster. Glutamate 489 is a binding site for Mg(2+). Serine 515 (proton acceptor) is an active-site residue.

Belongs to the IlvD/Edd family. Homodimer. [2Fe-2S] cluster is required as a cofactor. Mg(2+) serves as cofactor.

The enzyme catalyses (2R)-2,3-dihydroxy-3-methylbutanoate = 3-methyl-2-oxobutanoate + H2O. The catalysed reaction is (2R,3R)-2,3-dihydroxy-3-methylpentanoate = (S)-3-methyl-2-oxopentanoate + H2O. It participates in amino-acid biosynthesis; L-isoleucine biosynthesis; L-isoleucine from 2-oxobutanoate: step 3/4. Its pathway is amino-acid biosynthesis; L-valine biosynthesis; L-valine from pyruvate: step 3/4. Its function is as follows. Functions in the biosynthesis of branched-chain amino acids. Catalyzes the dehydration of (2R,3R)-2,3-dihydroxy-3-methylpentanoate (2,3-dihydroxy-3-methylvalerate) into 2-oxo-3-methylpentanoate (2-oxo-3-methylvalerate) and of (2R)-2,3-dihydroxy-3-methylbutanoate (2,3-dihydroxyisovalerate) into 2-oxo-3-methylbutanoate (2-oxoisovalerate), the penultimate precursor to L-isoleucine and L-valine, respectively. This is Dihydroxy-acid dehydratase from Stenotrophomonas maltophilia (strain K279a).